The following is a 104-amino-acid chain: Large ribosomal subunit protein bL21 (104 aa).

It belongs to the bacterial ribosomal protein bL21 family. Part of the 50S ribosomal subunit. Contacts protein L20.

Its function is as follows. This protein binds to 23S rRNA in the presence of protein L20. The sequence is that of Large ribosomal subunit protein bL21 from Gluconobacter oxydans (strain 621H) (Gluconobacter suboxydans).